A 368-amino-acid polypeptide reads, in one-letter code: uncharacterized protein (368 aa).

Residues 237–287 (ESLSIPSRRRPSSIAPIGTRPSRKEIAFSNSSTPTDQTLRPPNPPAANGNA) form a disordered region. A compositionally biased stretch (low complexity) spans 238-253 (SLSIPSRRRPSSIAPI). Residues 264–276 (FSNSSTPTDQTLR) are compositionally biased toward polar residues.

This is an uncharacterized protein from Schizosaccharomyces pombe (strain 972 / ATCC 24843) (Fission yeast).